The sequence spans 73 residues: Large ribosomal subunit protein bL31 (73 aa).

Cysteine 16, cysteine 18, cysteine 37, and cysteine 40 together coordinate Zn(2+).

The protein belongs to the bacterial ribosomal protein bL31 family. Type A subfamily. Part of the 50S ribosomal subunit. Requires Zn(2+) as cofactor.

Binds the 23S rRNA. The chain is Large ribosomal subunit protein bL31 from Pseudomonas fluorescens (strain ATCC BAA-477 / NRRL B-23932 / Pf-5).